The sequence spans 37 residues: Large ribosomal subunit protein bL36 (37 aa).

Belongs to the bacterial ribosomal protein bL36 family.

This is Large ribosomal subunit protein bL36 from Bacillus anthracis (strain A0248).